We begin with the raw amino-acid sequence, 278 residues long: MVPLWFTLSALCFVGAAVLLYVDIDRRRGLGRRRKSWAKSHGFDYEYESEDLLKRWKRGVMSTVGDVTAKNVVLGQIRGEAVFIFDIEEVATVIALHRKVGTNVVVDLRLKGLKEPRENDIWLLGAIGPRMVYSTNLDAARRACDRRMVTFAHTAPDCAEIMWNEQNWTLVAMPVTSNRAQWDEGLRTVRQFNDLLRVLPPVPQNGSQAALPRRGGSPSRPLAPTPAGRRELPPGRADVPPARGDVSRFAPRPEAGRSDAFRRPPPARNGREASHFQR.

Position 1 (Met1) is a topological domain, periplasmic. The helical transmembrane segment at 2-22 (VPLWFTLSALCFVGAAVLLYV) threads the bilayer. Residues 23–278 (DIDRRRGLGR…NGREASHFQR (256 aa)) lie on the Cytoplasmic side of the membrane. The interval 200 to 278 (PPVPQNGSQA…NGREASHFQR (79 aa)) is disordered. Basic and acidic residues predominate over residues 269-278 (NGREASHFQR).

In terms of assembly, monomer. Interacts (via N-terminus) with MmpL3; active trehalose monomycolate (TMM) biosynthesis is not required for the complex formation. Interacts with MSMEG_5308.

Its subcellular location is the cell inner membrane. The protein resides in the cell septum. It localises to the cell tip. In terms of biological role, required for MmpL3-dependent trehalose monomycolate (TMM) transport to the cell wall. Required for growth and cell elongation. This chain is Trehalose monomycolate transport factor A, found in Mycolicibacterium smegmatis (strain ATCC 700084 / mc(2)155) (Mycobacterium smegmatis).